Reading from the N-terminus, the 388-residue chain is Acetate kinase (388 aa).

Position 8 (asparagine 8) interacts with Mg(2+). An ATP-binding site is contributed by lysine 15. Arginine 88 serves as a coordination point for substrate. The Proton donor/acceptor role is filled by aspartate 144. Residues 202 to 206 (HLGNG), 276 to 278 (DMR), and 321 to 325 (GVGEN) contribute to the ATP site. Glutamate 375 serves as a coordination point for Mg(2+).

The protein belongs to the acetokinase family. Homodimer. Mg(2+) serves as cofactor. It depends on Mn(2+) as a cofactor.

It localises to the cytoplasm. The catalysed reaction is acetate + ATP = acetyl phosphate + ADP. It participates in metabolic intermediate biosynthesis; acetyl-CoA biosynthesis; acetyl-CoA from acetate: step 1/2. Its function is as follows. Catalyzes the formation of acetyl phosphate from acetate and ATP. Can also catalyze the reverse reaction. The polypeptide is Acetate kinase (Mycoplasmoides gallisepticum (strain R(low / passage 15 / clone 2)) (Mycoplasma gallisepticum)).